Consider the following 461-residue polypeptide: Photosystem II CP43 reaction center protein (461 aa).

Residues 1–2 constitute a propeptide that is removed on maturation; sequence ME. Threonine 3 is subject to N-acetylthreonine. Threonine 3 carries the phosphothreonine modification. The next 5 helical transmembrane spans lie at 57–81, 122–143, 166–188, 243–263, and 279–300; these read LFEV…PHLA, LLGP…KDRN, KALY…RKIT, KPFA…LSYS, and WFNN…ASQA. Position 355 (glutamate 355) interacts with [CaMn4O5] cluster. A helical membrane pass occupies residues 435-459; it reads RARAAAAGFEKGIDRDLEPVLSMTP.

The protein belongs to the PsbB/PsbC family. PsbC subfamily. As to quaternary structure, PSII is composed of 1 copy each of membrane proteins PsbA, PsbB, PsbC, PsbD, PsbE, PsbF, PsbH, PsbI, PsbJ, PsbK, PsbL, PsbM, PsbT, PsbX, PsbY, PsbZ, Psb30/Ycf12, at least 3 peripheral proteins of the oxygen-evolving complex and a large number of cofactors. It forms dimeric complexes. Requires Binds multiple chlorophylls and provides some of the ligands for the Ca-4Mn-5O cluster of the oxygen-evolving complex. It may also provide a ligand for a Cl- that is required for oxygen evolution. PSII binds additional chlorophylls, carotenoids and specific lipids. as cofactor.

Its subcellular location is the plastid. It localises to the chloroplast thylakoid membrane. One of the components of the core complex of photosystem II (PSII). It binds chlorophyll and helps catalyze the primary light-induced photochemical processes of PSII. PSII is a light-driven water:plastoquinone oxidoreductase, using light energy to abstract electrons from H(2)O, generating O(2) and a proton gradient subsequently used for ATP formation. The protein is Photosystem II CP43 reaction center protein of Ceratophyllum demersum (Rigid hornwort).